A 367-amino-acid chain; its full sequence is Glutamate 5-kinase (367 aa).

Lys9 is an ATP binding site. Substrate is bound by residues Ser49, Asp136, and Asn148. ATP contacts are provided by residues 168–169 and 210–216; these read TD and TGGMKSK. The 75-residue stretch at 276 to 350 folds into the PUA domain; sequence SGQIEIDAGA…GMQSQHIQAR (75 aa).

This sequence belongs to the glutamate 5-kinase family.

The protein resides in the cytoplasm. It catalyses the reaction L-glutamate + ATP = L-glutamyl 5-phosphate + ADP. Its pathway is amino-acid biosynthesis; L-proline biosynthesis; L-glutamate 5-semialdehyde from L-glutamate: step 1/2. Catalyzes the transfer of a phosphate group to glutamate to form L-glutamate 5-phosphate. This Bacillus cereus (strain ZK / E33L) protein is Glutamate 5-kinase.